A 413-amino-acid polypeptide reads, in one-letter code: Large ribosomal subunit protein uL4 (413 aa).

The residue at position 2 (A2) is an N-acetylalanine. The residue at position 14 (K14) is an N6-acetyllysine. The residue at position 97 (R97) is an Omega-N-methylarginine. K106 carries the post-translational modification N6-acetyllysine. A Glycyl lysine isopeptide (Lys-Gly) (interchain with G-Cter in SUMO2) cross-link involves residue K239. At K259 the chain carries N6-acetyllysine. T266 is modified (phosphothreonine). Phosphoserine is present on residues S290 and S295. R300 carries the citrulline modification. K327 participates in a covalent cross-link: Glycyl lysine isopeptide (Lys-Gly) (interchain with G-Cter in SUMO2). K333 carries the N6-acetyllysine modification. The tract at residues 355–413 is disordered; it reads AAALAAKSDPKEAPAKKKPVVGKKKKPVVGRKAAAAKKPAADKKAADKRAGPEDKKPAA. K361 carries the post-translational modification N6-acetyllysine; alternate. K361 participates in a covalent cross-link: Glycyl lysine isopeptide (Lys-Gly) (interchain with G-Cter in SUMO1); alternate. At S362 the chain carries Phosphoserine. A compositionally biased stretch (basic residues) spans 370–383; that stretch reads KKKPVVGKKKKPVV. The segment covering 393–413 has biased composition (basic and acidic residues); it reads PAADKKAADKRAGPEDKKPAA.

The protein belongs to the universal ribosomal protein uL4 family. Component of the large ribosomal subunit. May bind IPO9 with low affinity. Interacts with RBM3. Citrullinated by PADI4.

It is found in the cytoplasm. Its function is as follows. Component of the large ribosomal subunit. The ribosome is a large ribonucleoprotein complex responsible for the synthesis of proteins in the cell. This Oryctolagus cuniculus (Rabbit) protein is Large ribosomal subunit protein uL4 (RPL4).